A 478-amino-acid polypeptide reads, in one-letter code: DNA-directed RNA polymerase subunit alpha (478 aa).

The tract at residues 1–341 (MNKKIQDFFL…LDCMRLLNYE (341 aa)) is alpha N-terminal domain (alpha-NTD). The alpha C-terminal domain (alpha-CTD) stretch occupies residues 365-478 (RFYNSREDKT…KLGSRNEKNL (114 aa)).

This sequence belongs to the RNA polymerase alpha chain family. As to quaternary structure, in plastids the minimal PEP RNA polymerase catalytic core is composed of four subunits: alpha, beta, beta', and beta''. When a (nuclear-encoded) sigma factor is associated with the core the holoenzyme is formed, which can initiate transcription.

The protein resides in the plastid. It is found in the chloroplast. It carries out the reaction RNA(n) + a ribonucleoside 5'-triphosphate = RNA(n+1) + diphosphate. In terms of biological role, DNA-dependent RNA polymerase catalyzes the transcription of DNA into RNA using the four ribonucleoside triphosphates as substrates. The polypeptide is DNA-directed RNA polymerase subunit alpha (rpoA) (Tetradesmus obliquus (Green alga)).